The chain runs to 282 residues: Bis(5'-nucleosyl)-tetraphosphatase, symmetrical (282 aa).

It belongs to the Ap4A hydrolase family.

The catalysed reaction is P(1),P(4)-bis(5'-adenosyl) tetraphosphate + H2O = 2 ADP + 2 H(+). Functionally, hydrolyzes diadenosine 5',5'''-P1,P4-tetraphosphate to yield ADP. The protein is Bis(5'-nucleosyl)-tetraphosphatase, symmetrical of Klebsiella pneumoniae subsp. pneumoniae (strain ATCC 700721 / MGH 78578).